Reading from the N-terminus, the 487-residue chain is Glutamyl-tRNA(Gln) amidotransferase subunit A (487 aa).

Catalysis depends on charge relay system residues Lys74 and Ser149. The active-site Acyl-ester intermediate is Ser173.

The protein belongs to the amidase family. GatA subfamily. In terms of assembly, heterotrimer of A, B and C subunits.

The enzyme catalyses L-glutamyl-tRNA(Gln) + L-glutamine + ATP + H2O = L-glutaminyl-tRNA(Gln) + L-glutamate + ADP + phosphate + H(+). Allows the formation of correctly charged Gln-tRNA(Gln) through the transamidation of misacylated Glu-tRNA(Gln) in organisms which lack glutaminyl-tRNA synthetase. The reaction takes place in the presence of glutamine and ATP through an activated gamma-phospho-Glu-tRNA(Gln). This Synechococcus sp. (strain CC9311) protein is Glutamyl-tRNA(Gln) amidotransferase subunit A.